The sequence spans 329 residues: Transcription factor RF2b (329 aa).

Disordered stretches follow at residues 1–24 and 62–97; these read MQEP…RSEV and SSGP…DGSG. The region spanning 132–195 is the bZIP domain; it reads DPKRAKRILA…TGLSAENAEL (64 aa). Residues 134–155 are basic motif; that stretch reads KRAKRILANRQSAARSKERKAR. Positions 160 to 174 are leucine-zipper; the sequence is LERKVQTLQTEATTL. Residues 260-303 are disordered; it reads RQNGGTQLPPQFQPPRPNVPNHMLSHPNGLQDIMQQDPLGRLQG.

It belongs to the bZIP family. As to quaternary structure, binds DNA as a homodimer or as a heterodimer with RF2a. The heterodimer binds stronger to DNA than the homodimer. As to expression, expressed at high levels in roots, low level in leaf sheath, but not in leaf blade. Predominantly expressed in vascular tissues.

It localises to the nucleus. Transcription factor probably involved in vascular development and shoot tissue organization. Binds to the DNA sequence 5'-CCGAGTGTGCCCCTGG-3' present in the promoter region Box II of the phloem-specific rice tungro bacilliform virus (RTBV) promoter. May regulate tissue-specific expression of the RTBV promoter and virus replication. This chain is Transcription factor RF2b (RF2b), found in Oryza sativa subsp. japonica (Rice).